We begin with the raw amino-acid sequence, 453 residues long: Anthocyanidin 3-O-glucosyltransferase (453 aa).

The active-site Proton acceptor is the His-17. Residue His-17 coordinates an anthocyanidin. Catalysis depends on Asp-117, which acts as the Charge relay. Thr-139 lines the UDP-alpha-D-glucose pocket. His-148 is an an anthocyanidin binding site. 7 residues coordinate UDP-alpha-D-glucose: Ala-331, Gln-333, His-348, Trp-351, Asn-352, Ser-353, and Glu-356. Gly-371 serves as a coordination point for an anthocyanidin. UDP-alpha-D-glucose-binding residues include Asp-372 and Gln-373.

This sequence belongs to the UDP-glycosyltransferase family.

It carries out the reaction an anthocyanidin + UDP-alpha-D-glucose + H(+) = an anthocyanidin 3-O-beta-D-glucoside + UDP. The enzyme catalyses delphinidin + UDP-alpha-D-glucose = delphinidin 3-O-beta-D-glucoside + UDP. It catalyses the reaction pelargonidin + UDP-alpha-D-glucose = pelargonidin 3-O-beta-D-glucoside + UDP. The catalysed reaction is cyanidin + UDP-alpha-D-glucose = cyanidin 3-O-beta-D-glucoside + UDP + H(+). It functions in the pathway pigment biosynthesis; anthocyanin biosynthesis. In the presence of other necessary color factors, this glycosylation reaction allows the accumulation of anthocyanin pigments. Anthocyanidins are the preferred substrates, while flavonols are only a minor substrate in vitro. This chain is Anthocyanidin 3-O-glucosyltransferase, found in Gentiana triflora (Clustered gentian).